The sequence spans 551 residues: Cation/acetate symporter ActP (551 aa).

14 consecutive transmembrane segments (helical) span residues 5–25, 34–54, 77–97, 104–124, 150–170, 184–204, 207–227, 263–283, 304–324, 356–376, 406–426, 430–450, 469–489, and 498–518; these read HWSA…ALTG, IQAI…TYWA, GLAI…SALV, GLIY…LIAE, LSAC…MVGA, VAVV…GMLA, WVQI…AIMV, ISAL…PHIL, GFIG…ILLV, FFLG…VAGL, VSKI…ILFE, IAFM…PIII, LGLS…VTIL, and YEYP…FFSI.

Belongs to the sodium:solute symporter (SSF) (TC 2.A.21) family.

It is found in the cell inner membrane. Its function is as follows. Transports acetate. This Yersinia pseudotuberculosis serotype IB (strain PB1/+) protein is Cation/acetate symporter ActP.